The primary structure comprises 771 residues: Endoplasmin homolog (771 aa).

An N-terminal signal peptide occupies residues 1–24; the sequence is MANSSLLRVVLVALLLLGSVTVSA. 3 residues coordinate ATP: Asn63, Asp109, and Phe160. N-linked (GlcNAc...) asparagine glycosylation occurs at Asn63. The disordered stretch occupies residues 253-282; that stretch reads TAATPEPAAEEGSLDEGAVEEDPDKEGDTQ. Residues 260–277 show a composition bias toward acidic residues; the sequence is AAEEGSLDEGAVEEDPDK. N-linked (GlcNAc...) asparagine glycans are attached at residues Asn306 and Asn402. Residues 727–771 form a disordered region; the sequence is ADDSLLPPDDAEYTVSDTEAEEEEEQPKVDANADEEAEAVGEDDL. Over residues 758–771 the composition is skewed to acidic residues; that stretch reads NADEEAEAVGEDDL. Positions 768–771 match the Prevents secretion from ER motif; the sequence is EDDL.

The protein belongs to the heat shock protein 90 family. Homotetramer.

It is found in the endoplasmic reticulum. Functionally, molecular chaperone that functions in the processing and transport of secreted proteins. Required for the synthesis of lipophosphoglycan (LPG), a cell surface glycoconjugate. Necessary for the attachment of the galactosyl residue to the mannose within the phosphoglycan repeats of the nascent LPG chain. Also required for addition of phosphoglycan to acid phosphatase. Not required for normal growth. Has ATPase activity. Binds heparin with micromolar affinity which may facilitate infection of host cells. This chain is Endoplasmin homolog, found in Leishmania infantum.